Consider the following 450-residue polypeptide: Membrane-bound lytic murein transglycosylase F 2 (450 aa).

An N-terminal signal peptide occupies residues 1–20; it reads MRTWIAILAVVLVLLLNACT. The interval 21 to 261 is non-LT domain; it reads DGPEDGPRLE…AMENRYYTYV (241 aa). The interval 262-450 is LT domain; the sequence is GEFDFVDLRA…YRDVIRQAFE (189 aa). Residue Glu-308 is part of the active site.

This sequence in the N-terminal section; belongs to the bacterial solute-binding protein 3 family. The protein in the C-terminal section; belongs to the transglycosylase Slt family.

Its subcellular location is the cell outer membrane. It catalyses the reaction Exolytic cleavage of the (1-&gt;4)-beta-glycosidic linkage between N-acetylmuramic acid (MurNAc) and N-acetylglucosamine (GlcNAc) residues in peptidoglycan, from either the reducing or the non-reducing ends of the peptidoglycan chains, with concomitant formation of a 1,6-anhydrobond in the MurNAc residue.. Murein-degrading enzyme that degrades murein glycan strands and insoluble, high-molecular weight murein sacculi, with the concomitant formation of a 1,6-anhydromuramoyl product. Lytic transglycosylases (LTs) play an integral role in the metabolism of the peptidoglycan (PG) sacculus. Their lytic action creates space within the PG sacculus to allow for its expansion as well as for the insertion of various structures such as secretion systems and flagella. This Alkalilimnicola ehrlichii (strain ATCC BAA-1101 / DSM 17681 / MLHE-1) protein is Membrane-bound lytic murein transglycosylase F 2.